A 141-amino-acid chain; its full sequence is ATP synthase epsilon chain (141 aa).

It belongs to the ATPase epsilon chain family. F-type ATPases have 2 components, CF(1) - the catalytic core - and CF(0) - the membrane proton channel. CF(1) has five subunits: alpha(3), beta(3), gamma(1), delta(1), epsilon(1). CF(0) has three main subunits: a, b and c.

It localises to the cell inner membrane. Produces ATP from ADP in the presence of a proton gradient across the membrane. The sequence is that of ATP synthase epsilon chain from Halorhodospira halophila (strain DSM 244 / SL1) (Ectothiorhodospira halophila (strain DSM 244 / SL1)).